A 217-amino-acid polypeptide reads, in one-letter code: Peptide methionine sulfoxide reductase MsrA 1 (217 aa).

Residue cysteine 54 is part of the active site.

The protein belongs to the MsrA Met sulfoxide reductase family.

The enzyme catalyses L-methionyl-[protein] + [thioredoxin]-disulfide + H2O = L-methionyl-(S)-S-oxide-[protein] + [thioredoxin]-dithiol. The catalysed reaction is [thioredoxin]-disulfide + L-methionine + H2O = L-methionine (S)-S-oxide + [thioredoxin]-dithiol. Functionally, has an important function as a repair enzyme for proteins that have been inactivated by oxidation. Catalyzes the reversible oxidation-reduction of methionine sulfoxide in proteins to methionine. The protein is Peptide methionine sulfoxide reductase MsrA 1 (msrA1) of Caulobacter vibrioides (strain ATCC 19089 / CIP 103742 / CB 15) (Caulobacter crescentus).